A 324-amino-acid chain; its full sequence is Acetyl-coenzyme A carboxylase carboxyl transferase subunit alpha (324 aa).

One can recognise a CoA carboxyltransferase C-terminal domain in the interval 37–291 (KLERRLDKLK…RDFILREWLR (255 aa)).

It belongs to the AccA family. As to quaternary structure, acetyl-CoA carboxylase is a heterohexamer composed of biotin carboxyl carrier protein (AccB), biotin carboxylase (AccC) and two subunits each of ACCase subunit alpha (AccA) and ACCase subunit beta (AccD).

The protein resides in the cytoplasm. It carries out the reaction N(6)-carboxybiotinyl-L-lysyl-[protein] + acetyl-CoA = N(6)-biotinyl-L-lysyl-[protein] + malonyl-CoA. The protein operates within lipid metabolism; malonyl-CoA biosynthesis; malonyl-CoA from acetyl-CoA: step 1/1. Functionally, component of the acetyl coenzyme A carboxylase (ACC) complex. First, biotin carboxylase catalyzes the carboxylation of biotin on its carrier protein (BCCP) and then the CO(2) group is transferred by the carboxyltransferase to acetyl-CoA to form malonyl-CoA. This chain is Acetyl-coenzyme A carboxylase carboxyl transferase subunit alpha, found in Chlamydia abortus (strain DSM 27085 / S26/3) (Chlamydophila abortus).